The following is a 388-amino-acid chain: LL-diaminopimelate aminotransferase (388 aa).

Tyrosine 15 and glycine 40 together coordinate substrate. Residues tyrosine 69, 103–104 (SK), tyrosine 128, asparagine 178, tyrosine 209, and 237–239 (SLS) each bind pyridoxal 5'-phosphate. Substrate-binding residues include lysine 104, tyrosine 128, and asparagine 178. Lysine 240 bears the N6-(pyridoxal phosphate)lysine mark. Pyridoxal 5'-phosphate is bound at residue arginine 248. Arginine 366 provides a ligand contact to substrate.

It belongs to the class-I pyridoxal-phosphate-dependent aminotransferase family. LL-diaminopimelate aminotransferase subfamily. As to quaternary structure, homodimer. Pyridoxal 5'-phosphate is required as a cofactor.

It catalyses the reaction (2S,6S)-2,6-diaminopimelate + 2-oxoglutarate = (S)-2,3,4,5-tetrahydrodipicolinate + L-glutamate + H2O + H(+). Its pathway is amino-acid biosynthesis; L-lysine biosynthesis via DAP pathway; LL-2,6-diaminopimelate from (S)-tetrahydrodipicolinate (aminotransferase route): step 1/1. Functionally, involved in the synthesis of meso-diaminopimelate (m-DAP or DL-DAP), required for both lysine and peptidoglycan biosynthesis. Catalyzes the direct conversion of tetrahydrodipicolinate to LL-diaminopimelate. Can also use m-DAP instead of LL-DAP as the amino-group donor. In Syntrophobacter fumaroxidans (strain DSM 10017 / MPOB), this protein is LL-diaminopimelate aminotransferase.